A 310-amino-acid polypeptide reads, in one-letter code: Lipoyl synthase (310 aa).

Cys51, Cys56, Cys62, Cys77, Cys81, Cys84, and Ser290 together coordinate [4Fe-4S] cluster. The 218-residue stretch at 63 to 280 (WSRKTATYLA…RRVGESLGLF (218 aa)) folds into the Radical SAM core domain.

Belongs to the radical SAM superfamily. Lipoyl synthase family. It depends on [4Fe-4S] cluster as a cofactor.

The protein localises to the cytoplasm. The enzyme catalyses [[Fe-S] cluster scaffold protein carrying a second [4Fe-4S](2+) cluster] + N(6)-octanoyl-L-lysyl-[protein] + 2 oxidized [2Fe-2S]-[ferredoxin] + 2 S-adenosyl-L-methionine + 4 H(+) = [[Fe-S] cluster scaffold protein] + N(6)-[(R)-dihydrolipoyl]-L-lysyl-[protein] + 4 Fe(3+) + 2 hydrogen sulfide + 2 5'-deoxyadenosine + 2 L-methionine + 2 reduced [2Fe-2S]-[ferredoxin]. It functions in the pathway protein modification; protein lipoylation via endogenous pathway; protein N(6)-(lipoyl)lysine from octanoyl-[acyl-carrier-protein]: step 2/2. Functionally, catalyzes the radical-mediated insertion of two sulfur atoms into the C-6 and C-8 positions of the octanoyl moiety bound to the lipoyl domains of lipoate-dependent enzymes, thereby converting the octanoylated domains into lipoylated derivatives. This chain is Lipoyl synthase, found in Chlamydia abortus (strain DSM 27085 / S26/3) (Chlamydophila abortus).